The chain runs to 62 residues: Cuticle protein 6.4 (62 aa).

Its function is as follows. Component of the cuticle of migratory locust which contains more than 100 different structural proteins. In Locusta migratoria (Migratory locust), this protein is Cuticle protein 6.4.